The primary structure comprises 137 residues: NADPH-dependent 7-cyano-7-deazaguanine reductase (137 aa).

Catalysis depends on Cys50, which acts as the Thioimide intermediate. The active-site Proton donor is the Asp57. Substrate contacts are provided by residues 72–74 (VEL) and 91–92 (HE).

It belongs to the GTP cyclohydrolase I family. QueF type 1 subfamily.

The protein localises to the cytoplasm. It carries out the reaction 7-aminomethyl-7-carbaguanine + 2 NADP(+) = 7-cyano-7-deazaguanine + 2 NADPH + 3 H(+). The protein operates within tRNA modification; tRNA-queuosine biosynthesis. In terms of biological role, catalyzes the NADPH-dependent reduction of 7-cyano-7-deazaguanine (preQ0) to 7-aminomethyl-7-deazaguanine (preQ1). This chain is NADPH-dependent 7-cyano-7-deazaguanine reductase, found in Synechocystis sp. (strain ATCC 27184 / PCC 6803 / Kazusa).